The following is a 199-amino-acid chain: 3-isopropylmalate dehydratase small subunit (199 aa).

This sequence belongs to the LeuD family. LeuD type 1 subfamily. As to quaternary structure, heterodimer of LeuC and LeuD.

The enzyme catalyses (2R,3S)-3-isopropylmalate = (2S)-2-isopropylmalate. It participates in amino-acid biosynthesis; L-leucine biosynthesis; L-leucine from 3-methyl-2-oxobutanoate: step 2/4. Functionally, catalyzes the isomerization between 2-isopropylmalate and 3-isopropylmalate, via the formation of 2-isopropylmaleate. The polypeptide is 3-isopropylmalate dehydratase small subunit (Bacillus pumilus (strain SAFR-032)).